A 463-amino-acid chain; its full sequence is MGPWSGSRLVALLLLVYGAGSVRGDTPANCTYPDLLGTWVFQVGSSGSQRDVNCSVMGPPEKKVVVHLKKLDTAYDDFGNSGHFTIIYNQGFEIVLNDYKWFAFFKYKEEGGKVTSYCHETMTGWVHDVLGRNRACFTGRKTGNTSENVNVNTARLAGLEETYSNRLYRYNHDFVKAINAIQKSWTAAPYMEYETLTLKEMIRRGGGHSRRIPRPKPAPITAEIQKKILHLPTSWDWRNVHGINFVTPVRNQGSCGSCYSFASMGMMEARIRILTNNTQTPILSPQEVVSCSQYAQGCEGGFPYLIAGKYAQDFGLVEEDCFPYTGTDSPCRLKEGCFRYYSSEYHYVGGFYGGCNEALMKLELVHQGPMAVAFEVYDDFLHYRKGVYHHTGLRDPFNPFELTNHAVLLVGYGTDAASGLDYWIVKNSWGTSWGENGYFRIRRGTDECAIESIALAATPIPKL.

The first 24 residues, 1–24 (MGPWSGSRLVALLLLVYGAGSVRG), serve as a signal peptide directing secretion. N-linked (GlcNAc...) asparagine glycans are attached at residues asparagine 29 and asparagine 53. 2 disulfide bridges follow: cysteine 30-cysteine 118 and cysteine 54-cysteine 136. The propeptide occupies 135 to 230 (ACFTGRKTGN…TAEIQKKILH (96 aa)). Residue asparagine 144 is glycosylated (N-linked (GlcNAc...) asparagine). Intrachain disulfides connect cysteine 255-cysteine 298, cysteine 291-cysteine 331, and cysteine 321-cysteine 337. Residue cysteine 258 is part of the active site. N-linked (GlcNAc...) asparagine glycosylation occurs at asparagine 276. Residues phenylalanine 302 and tyrosine 304 each contribute to the chloride site. Tyrosine 347 contacts chloride. Catalysis depends on residues histidine 405 and asparagine 427.

This sequence belongs to the peptidase C1 family. As to quaternary structure, tetramer of heterotrimers consisting of exclusion domain, heavy- and light chains. Chloride is required as a cofactor.

Its subcellular location is the lysosome. The catalysed reaction is Release of an N-terminal dipeptide, Xaa-Yaa-|-Zaa-, except when Xaa is Arg or Lys, or Yaa or Zaa is Pro.. Functionally, thiol protease. Has dipeptidylpeptidase activity. Active against a broad range of dipeptide substrates composed of both polar and hydrophobic amino acids. Proline cannot occupy the P1 position and arginine cannot occupy the P2 position of the substrate. Can act as both an exopeptidase and endopeptidase. Activates serine proteases such as elastase, cathepsin G and granzymes A and B. The chain is Dipeptidyl peptidase 1 (CTSC) from Bos taurus (Bovine).